A 98-amino-acid polypeptide reads, in one-letter code: MAHEHGHEHGHHKMELPDYRQWKIEGTPLETIQKKLAAKGLRDPWGRNEAWRYMGGFAKSVSFSDVFFKGFKWGFAAFVVAVGAEYYLESLNKDKKHH.

Alanine 2 is subject to N-acetylalanine. Pros-methylhistidine is present on residues histidine 5, histidine 7, and histidine 9. Residues lysine 23 and lysine 34 each carry the N6-acetyllysine; alternate modification. Lysine 23 and lysine 34 each carry N6-succinyllysine; alternate. The helical transmembrane segment at 66-88 threads the bilayer; the sequence is VFFKGFKWGFAAFVVAVGAEYYL.

It belongs to the complex I NDUFB3 subunit family. In terms of assembly, complex I is composed of 45 different subunits. Post-translationally, methylation at His residues by METTL9 enhances complex I-mediated mitochondrial respiration.

Its subcellular location is the mitochondrion inner membrane. Its function is as follows. Accessory subunit of the mitochondrial membrane respiratory chain NADH dehydrogenase (Complex I), that is believed not to be involved in catalysis. Complex I functions in the transfer of electrons from NADH to the respiratory chain. The immediate electron acceptor for the enzyme is believed to be ubiquinone. This Gorilla gorilla gorilla (Western lowland gorilla) protein is NADH dehydrogenase [ubiquinone] 1 beta subcomplex subunit 3 (NDUFB3).